The chain runs to 330 residues: Ferredoxin--NADP reductase (330 aa).

7 residues coordinate FAD: Glu-35, Gln-43, Tyr-48, Val-90, Phe-123, Asp-285, and Thr-326.

The protein belongs to the ferredoxin--NADP reductase type 2 family. As to quaternary structure, homodimer. The cofactor is FAD.

The catalysed reaction is 2 reduced [2Fe-2S]-[ferredoxin] + NADP(+) + H(+) = 2 oxidized [2Fe-2S]-[ferredoxin] + NADPH. This chain is Ferredoxin--NADP reductase, found in Streptococcus pyogenes serotype M3 (strain ATCC BAA-595 / MGAS315).